The primary structure comprises 229 residues: Type-5 uracil-DNA glycosylase (229 aa).

Residues Cys19, Cys22, Cys123, and Cys138 each coordinate [4Fe-4S] cluster.

It belongs to the uracil-DNA glycosylase (UDG) superfamily. Type 5 (UDGb) family.

In terms of biological role, DNA glycosylase with broad substrate specificity. This chain is Type-5 uracil-DNA glycosylase, found in Mycobacterium leprae (strain TN).